Here is a 118-residue protein sequence, read N- to C-terminus: Protein yippee-like 1 (118 aa).

In terms of domain architecture, Yippee spans 19–116 (RTYSCIHCRA…IELAHMIKDN (98 aa)). Residues C23, C26, C79, and C82 each coordinate Zn(2+). Positions 99–104 (KYKEGK) match the Nuclear localization signal motif.

The protein belongs to the yippee family.

It is found in the nucleus. Its function is as follows. May play a role in epithelioid conversion of fibroblasts. This chain is Protein yippee-like 1 (Ypel1), found in Mus musculus (Mouse).